Consider the following 405-residue polypeptide: Arginine deiminase (405 aa).

Residue Cys395 is the Amidino-cysteine intermediate of the active site.

This sequence belongs to the arginine deiminase family.

Its subcellular location is the cytoplasm. The enzyme catalyses L-arginine + H2O = L-citrulline + NH4(+). It participates in amino-acid degradation; L-arginine degradation via ADI pathway; carbamoyl phosphate from L-arginine: step 1/2. This Rhodococcus erythropolis (strain PR4 / NBRC 100887) protein is Arginine deiminase.